The chain runs to 601 residues: Bifunctional protein GlmU (601 aa).

Positions Met1–Arg375 are pyrophosphorylase. UDP-N-acetyl-alpha-D-glucosamine-binding positions include Leu10–Gly13, Lys24, Gln75, and Gly81–Thr82. Asp165 is a Mg(2+) binding site. Residues Gly201, Glu216, Asn230, and Asn373 each contribute to the UDP-N-acetyl-alpha-D-glucosamine site. Asn373 is a Mg(2+) binding site. Residues Val376–Tyr396 are linker. The N-acetyltransferase stretch occupies residues Gly397–Gly601. Residues Arg478 and Lys496 each coordinate UDP-N-acetyl-alpha-D-glucosamine. Catalysis depends on His508, which acts as the Proton acceptor. Tyr511 and Asn522 together coordinate UDP-N-acetyl-alpha-D-glucosamine. Acetyl-CoA-binding positions include Ala525, Asn531–Tyr532, and Ala568.

This sequence in the N-terminal section; belongs to the N-acetylglucosamine-1-phosphate uridyltransferase family. The protein in the C-terminal section; belongs to the transferase hexapeptide repeat family. In terms of assembly, homotrimer. Mg(2+) serves as cofactor.

The protein localises to the cytoplasm. It carries out the reaction alpha-D-glucosamine 1-phosphate + acetyl-CoA = N-acetyl-alpha-D-glucosamine 1-phosphate + CoA + H(+). It catalyses the reaction N-acetyl-alpha-D-glucosamine 1-phosphate + UTP + H(+) = UDP-N-acetyl-alpha-D-glucosamine + diphosphate. It functions in the pathway nucleotide-sugar biosynthesis; UDP-N-acetyl-alpha-D-glucosamine biosynthesis; N-acetyl-alpha-D-glucosamine 1-phosphate from alpha-D-glucosamine 6-phosphate (route II): step 2/2. It participates in nucleotide-sugar biosynthesis; UDP-N-acetyl-alpha-D-glucosamine biosynthesis; UDP-N-acetyl-alpha-D-glucosamine from N-acetyl-alpha-D-glucosamine 1-phosphate: step 1/1. The protein operates within bacterial outer membrane biogenesis; LPS lipid A biosynthesis. Its function is as follows. Catalyzes the last two sequential reactions in the de novo biosynthetic pathway for UDP-N-acetylglucosamine (UDP-GlcNAc). The C-terminal domain catalyzes the transfer of acetyl group from acetyl coenzyme A to glucosamine-1-phosphate (GlcN-1-P) to produce N-acetylglucosamine-1-phosphate (GlcNAc-1-P), which is converted into UDP-GlcNAc by the transfer of uridine 5-monophosphate (from uridine 5-triphosphate), a reaction catalyzed by the N-terminal domain. This Tropheryma whipplei (strain TW08/27) (Whipple's bacillus) protein is Bifunctional protein GlmU.